The primary structure comprises 346 residues: Secreted frizzled-related protein 4 (346 aa).

The N-terminal stretch at 1 to 18 (MFLSILVALCLWLHLALG) is a signal peptide. Residues 19-139 (VRGAPCEAVR…VYDRGVCISP (121 aa)) form the FZ domain. 5 disulfides stabilise this stretch: Cys24–Cys85, Cys32–Cys78, Cys69–Cys108, Cys97–Cys136, and Cys101–Cys125. 2 N-linked (GlcNAc...) asparagine glycosylation sites follow: Asn38 and Asn68. N-linked (GlcNAc...) asparagine glycans are attached at residues Asn116, Asn194, and Asn240. In terms of domain architecture, NTR spans 178-307 (CKCKKVKPTL…IQDKKKTAGR (130 aa)). The segment covering 294–303 (QRRTIQDKKK) has biased composition (basic and acidic residues). Residues 294–346 (QRRTIQDKKKTAGRTSRSNPPKPKGKPPAPKPASPKKNIKTRSAQKKTNPKKV) form a disordered region. Residues 313 to 326 (PPKPKGKPPAPKPA) show a composition bias toward pro residues. Residues 330 to 346 (KNIKTRSAQKKTNPKKV) show a composition bias toward basic residues.

It belongs to the secreted frizzled-related protein (sFRP) family.

It localises to the secreted. Its function is as follows. Soluble frizzled-related proteins (sFRPS) function as modulators of Wnt signaling through direct interaction with Wnts. They have a role in regulating cell growth and differentiation in specific cell types. SFRP4 plays a role in bone morphogenesis. May also act as a regulator of adult uterine morphology and function. May also increase apoptosis during ovulation possibly through modulation of FZ1/FZ4/WNT4 signaling. Has phosphaturic effects by specifically inhibiting sodium-dependent phosphate uptake. This Macaca mulatta (Rhesus macaque) protein is Secreted frizzled-related protein 4 (SFRP4).